The chain runs to 334 residues: G2/mitotic-specific cyclin-1 (334 aa).

This sequence belongs to the cyclin family. Cyclin AB subfamily.

Its function is as follows. Essential for the control of the cell cycle at the G2/M (mitosis) transition. This chain is G2/mitotic-specific cyclin-1 (CYC1), found in Trypanosoma brucei brucei.